The following is a 136-amino-acid chain: MIYTGIDIVAVDRIRRAVERWGDRFIQRIFSTAETALCHGRTESLAARWAAKEAVAKLLGVGLRGIGGAGGVAFHDIEALADAHGRPMVILRGAAQARARELGIDSIRLSLSHDHGLAIAIAIALSSPTPRRRMPW.

Residues Asp-7 and Glu-53 each contribute to the Mg(2+) site.

The protein belongs to the P-Pant transferase superfamily. AcpS family. Mg(2+) is required as a cofactor.

It localises to the cytoplasm. It catalyses the reaction apo-[ACP] + CoA = holo-[ACP] + adenosine 3',5'-bisphosphate + H(+). Its function is as follows. Transfers the 4'-phosphopantetheine moiety from coenzyme A to a Ser of acyl-carrier-protein. The sequence is that of Holo-[acyl-carrier-protein] synthase from Roseiflexus castenholzii (strain DSM 13941 / HLO8).